The following is a 309-amino-acid chain: Aspartate carbamoyltransferase catalytic subunit (309 aa).

The carbamoyl phosphate site is built by arginine 58 and threonine 59. Lysine 86 contributes to the L-aspartate binding site. Carbamoyl phosphate contacts are provided by arginine 108, histidine 136, and glutamine 139. L-aspartate contacts are provided by arginine 170 and arginine 224. 2 residues coordinate carbamoyl phosphate: glycine 266 and proline 267.

This sequence belongs to the aspartate/ornithine carbamoyltransferase superfamily. ATCase family. In terms of assembly, heterododecamer (2C3:3R2) of six catalytic PyrB chains organized as two trimers (C3), and six regulatory PyrI chains organized as three dimers (R2).

The catalysed reaction is carbamoyl phosphate + L-aspartate = N-carbamoyl-L-aspartate + phosphate + H(+). It participates in pyrimidine metabolism; UMP biosynthesis via de novo pathway; (S)-dihydroorotate from bicarbonate: step 2/3. Its function is as follows. Catalyzes the condensation of carbamoyl phosphate and aspartate to form carbamoyl aspartate and inorganic phosphate, the committed step in the de novo pyrimidine nucleotide biosynthesis pathway. The sequence is that of Aspartate carbamoyltransferase catalytic subunit from Campylobacter concisus (strain 13826).